We begin with the raw amino-acid sequence, 284 residues long: Protoheme IX farnesyltransferase (284 aa).

Transmembrane regions (helical) follow at residues 13–33, 35–55, 84–104, 106–126, 134–154, 163–183, 205–225, 229–249, and 264–284; these read VTVLVLATVLPGMYLGTTGYP, LTVISITLFGTYLMSSASFIL, FALLLGIVVAIVSFGILTYFI, LLTAVCALAALLLYVFLYTIW, NIVIGGISGCIGPLIGYAAMA, VMFLMIFLWTPAHFWALAIFL, VNQIFLYAIAYSLSVIGFYFV, MGYLFLLSAIVLTVLILGFAY, and FFFSILHLFLVSIAIVIDSKI.

This sequence belongs to the UbiA prenyltransferase family. Protoheme IX farnesyltransferase subfamily.

Its subcellular location is the cell inner membrane. It carries out the reaction heme b + (2E,6E)-farnesyl diphosphate + H2O = Fe(II)-heme o + diphosphate. It participates in porphyrin-containing compound metabolism; heme O biosynthesis; heme O from protoheme: step 1/1. Its function is as follows. Converts heme B (protoheme IX) to heme O by substitution of the vinyl group on carbon 2 of heme B porphyrin ring with a hydroxyethyl farnesyl side group. In Leptospira biflexa serovar Patoc (strain Patoc 1 / Ames), this protein is Protoheme IX farnesyltransferase.